We begin with the raw amino-acid sequence, 271 residues long: Putative glucose-6-phosphate 1-epimerase (271 aa).

Substrate-binding residues include arginine 71 and arginine 93. Residue histidine 151 is part of the active site. Aspartate 193 serves as a coordination point for substrate. Residue glutamate 249 is part of the active site.

The protein belongs to the glucose-6-phosphate 1-epimerase family.

The catalysed reaction is alpha-D-glucose 6-phosphate = beta-D-glucose 6-phosphate. In Haemophilus influenzae (strain ATCC 51907 / DSM 11121 / KW20 / Rd), this protein is Putative glucose-6-phosphate 1-epimerase.